A 504-amino-acid chain; its full sequence is Cystathionine beta-synthase (504 aa).

The heme site is built by C12 and H23. K78 bears the N6-(pyridoxal phosphate)lysine mark. Residues N108, 215–219, and S307 each bind pyridoxal 5'-phosphate; that span reads GTGGT. CBS domains lie at 375–434 and 442–498; these read LSFD…IVKC and MVKQ…NGTS.

It belongs to the cysteine synthase/cystathionine beta-synthase family. As to quaternary structure, homodimer. Pyridoxal 5'-phosphate serves as cofactor.

It catalyses the reaction L-homocysteine + L-serine = L,L-cystathionine + H2O. Its pathway is amino-acid biosynthesis; L-cysteine biosynthesis; L-cysteine from L-homocysteine and L-serine: step 1/2. Has no response to S-adenosyl-methionine/AdoMet, unlike mammalian orthologs. Binds non-covalently to a heme group that may control the redox sensitivity of the enzyme. Functionally, hydro-lyase catalyzing the first step of the transsulfuration pathway, where the hydroxyl group of L-serine is displaced by L-homocysteine in a beta-replacement reaction to form L-cystathionine, the precursor of L-cysteine. In Apis mellifera (Honeybee), this protein is Cystathionine beta-synthase.